The following is a 237-amino-acid chain: 2-C-methyl-D-erythritol 4-phosphate cytidylyltransferase (237 aa).

The protein belongs to the IspD/TarI cytidylyltransferase family. IspD subfamily.

The catalysed reaction is 2-C-methyl-D-erythritol 4-phosphate + CTP + H(+) = 4-CDP-2-C-methyl-D-erythritol + diphosphate. It participates in isoprenoid biosynthesis; isopentenyl diphosphate biosynthesis via DXP pathway; isopentenyl diphosphate from 1-deoxy-D-xylulose 5-phosphate: step 2/6. Its function is as follows. Catalyzes the formation of 4-diphosphocytidyl-2-C-methyl-D-erythritol from CTP and 2-C-methyl-D-erythritol 4-phosphate (MEP). The polypeptide is 2-C-methyl-D-erythritol 4-phosphate cytidylyltransferase (Vibrio vulnificus (strain CMCP6)).